The primary structure comprises 359 residues: DNA-directed RNA polymerase RPB3-11 homolog (359 aa).

The protein in the N-terminal section; belongs to the archaeal RpoD/eukaryotic RPB3 RNA polymerase subunit family. In the C-terminal section; belongs to the archaeal RpoL/eukaryotic RPB11/RPC19 RNA polymerase subunit family. As to quaternary structure, part of the viral DNA-directed RNA polymerase that consists of 8 polII-like subunits (RPB1, RPB2, RPB3, RPB5, RPB6, RPB7, RPB9, RPB10), a capping enzyme and a termination factor.

It is found in the host cytoplasm. Its subcellular location is the virion. In terms of biological role, component of the DNA-directed RNA polymerase (RNAP) that catalyzes the transcription in the cytoplasm of viral DNA into RNA using the four ribonucleoside triphosphates as substrates. This Ornithodoros (relapsing fever ticks) protein is DNA-directed RNA polymerase RPB3-11 homolog.